The chain runs to 233 residues: Ribonuclease 3 (233 aa).

The region spanning Gln-6 to Gly-135 is the RNase III domain. Glu-48 is a Mg(2+) binding site. Asp-52 is an active-site residue. Mg(2+) is bound by residues Asp-121 and Glu-124. Residue Glu-124 is part of the active site. One can recognise a DRBM domain in the interval Asp-161–Asn-230. The disordered stretch occupies residues Ile-205–Lys-233.

Belongs to the ribonuclease III family. As to quaternary structure, homodimer. The cofactor is Mg(2+).

It localises to the cytoplasm. The catalysed reaction is Endonucleolytic cleavage to 5'-phosphomonoester.. In terms of biological role, digests double-stranded RNA. Involved in the processing of primary rRNA transcript to yield the immediate precursors to the large and small rRNAs (23S and 16S). Processes some mRNAs, and tRNAs when they are encoded in the rRNA operon. Processes pre-crRNA and tracrRNA of type II CRISPR loci if present in the organism. The sequence is that of Ribonuclease 3 from Limosilactobacillus reuteri (strain DSM 20016) (Lactobacillus reuteri).